Here is a 685-residue protein sequence, read N- to C-terminus: DNA ligase (685 aa).

NAD(+)-binding positions include 47–51 (DSEYD), 96–97 (SL), and Glu-125. Lys-127 (N6-AMP-lysine intermediate) is an active-site residue. The NAD(+) site is built by Arg-148, Glu-185, Lys-304, and Lys-328. Zn(2+) is bound by residues Cys-422, Cys-425, Cys-440, and Cys-446. The BRCT domain occupies 605 to 685 (AEAQPLKGQT…ELLALLAANA (81 aa)).

Belongs to the NAD-dependent DNA ligase family. LigA subfamily. The cofactor is Mg(2+). It depends on Mn(2+) as a cofactor.

The enzyme catalyses NAD(+) + (deoxyribonucleotide)n-3'-hydroxyl + 5'-phospho-(deoxyribonucleotide)m = (deoxyribonucleotide)n+m + AMP + beta-nicotinamide D-nucleotide.. In terms of biological role, DNA ligase that catalyzes the formation of phosphodiester linkages between 5'-phosphoryl and 3'-hydroxyl groups in double-stranded DNA using NAD as a coenzyme and as the energy source for the reaction. It is essential for DNA replication and repair of damaged DNA. The sequence is that of DNA ligase from Shewanella baltica (strain OS223).